The following is a 471-amino-acid chain: Putative multidrug resistance protein MdtD (471 aa).

Topologically, residues 1–11 are periplasmic; that stretch reads MTDLPDSTRWQ. The helical transmembrane segment at 12 to 32 threads the bilayer; sequence LWIVAFGFFMQSLDTTIVNTA. Over 33–48 the chain is Cytoplasmic; it reads LPSMAQSLGESPLHMH. The chain crosses the membrane as a helical span at residues 49–69; the sequence is MVIVSYVLTVAVMLPASGWLA. The Periplasmic portion of the chain corresponds to 70–76; the sequence is DKVGVRN. The chain crosses the membrane as a helical span at residues 77 to 97; sequence IFFTAIVLFTLGSLFCALSGT. Residues 98–101 lie on the Cytoplasmic side of the membrane; sequence LNEL. Residues 102-124 traverse the membrane as a helical segment; that stretch reads LLARALQGVGGAMMVPVGRLTVM. Residues 125 to 137 are Periplasmic-facing; the sequence is KIVPREQYMAAMT. Residues 138 to 158 form a helical membrane-spanning segment; it reads FVTLPGQVGPLLGPALGGLLV. Residues 159 to 164 lie on the Cytoplasmic side of the membrane; sequence EYASWH. Residues 165–185 traverse the membrane as a helical segment; that stretch reads WIFLINIPVGIIGAIATLMLM. Residues 186–196 are Periplasmic-facing; sequence PNYTMQTRRFD. The chain crosses the membrane as a helical span at residues 197-217; the sequence is LSGFLLLAVGMAVLTLALDGS. Over 218 to 224 the chain is Cytoplasmic; that stretch reads KGTGLSP. Residues 225–245 traverse the membrane as a helical segment; sequence LAITGLVAVGVVALVLYLLHA. Residues 246-262 lie on the Periplasmic side of the membrane; sequence RNNHRALFSLKLFRTRT. The helical transmembrane segment at 263–283 threads the bilayer; that stretch reads FSLGLAGSFAGRIGSGMLPFM. At 284 to 285 the chain is on the cytoplasmic side; it reads TP. A helical membrane pass occupies residues 286-306; sequence VFLQIGLGFSPFHAGLMMIPM. Residues 307-341 are Periplasmic-facing; sequence VLGSMGMKRIVVQVVNRFGYRRVLVATTLGLSLVT. The helical transmembrane segment at 342–362 threads the bilayer; it reads LLFMTTALLGWYYVLPFVLFL. At 363-395 the chain is on the cytoplasmic side; sequence QGMVNSTRFSSMNTLTLKDLPDNLASSGNSLLS. Residues 396–416 traverse the membrane as a helical segment; sequence MIMQLSMSIGVTIAGLLLGLF. At 417-430 the chain is on the periplasmic side; it reads GSQHVSVDSGTTQT. A helical membrane pass occupies residues 431 to 451; the sequence is VFMYTWLSMAFIIALPAFIFA. Residues 452–471 are Cytoplasmic-facing; that stretch reads RVPNDTHQNVAISRRKRSAQ.

It belongs to the major facilitator superfamily. TCR/Tet family.

It localises to the cell inner membrane. The sequence is that of Putative multidrug resistance protein MdtD from Escherichia coli O127:H6 (strain E2348/69 / EPEC).